The sequence spans 45 residues: Large ribosomal subunit protein bL34 (45 aa).

It belongs to the bacterial ribosomal protein bL34 family.

The sequence is that of Large ribosomal subunit protein bL34 (rpmH) from Streptomyces bikiniensis.